We begin with the raw amino-acid sequence, 89 residues long: Large ribosomal subunit protein bL27 (89 aa).

Residues 1-20 are disordered; it reads MAHKKAGGSSRNGRDSAGRR.

The protein belongs to the bacterial ribosomal protein bL27 family.

In Jannaschia sp. (strain CCS1), this protein is Large ribosomal subunit protein bL27.